Reading from the N-terminus, the 257-residue chain is Imidazole glycerol phosphate synthase subunit HisF (257 aa).

Catalysis depends on residues Asp-11 and Asp-130.

This sequence belongs to the HisA/HisF family. In terms of assembly, heterodimer of HisH and HisF.

It is found in the cytoplasm. It carries out the reaction 5-[(5-phospho-1-deoxy-D-ribulos-1-ylimino)methylamino]-1-(5-phospho-beta-D-ribosyl)imidazole-4-carboxamide + L-glutamine = D-erythro-1-(imidazol-4-yl)glycerol 3-phosphate + 5-amino-1-(5-phospho-beta-D-ribosyl)imidazole-4-carboxamide + L-glutamate + H(+). Its pathway is amino-acid biosynthesis; L-histidine biosynthesis; L-histidine from 5-phospho-alpha-D-ribose 1-diphosphate: step 5/9. IGPS catalyzes the conversion of PRFAR and glutamine to IGP, AICAR and glutamate. The HisF subunit catalyzes the cyclization activity that produces IGP and AICAR from PRFAR using the ammonia provided by the HisH subunit. In Xylella fastidiosa (strain M23), this protein is Imidazole glycerol phosphate synthase subunit HisF.